A 398-amino-acid chain; its full sequence is Endoglucanase (398 aa).

The N-terminal stretch at 1–23 is a signal peptide; that stretch reads MSPLKCMALAALGAVMFVGSAQA. Glu-58 functions as the Proton donor in the catalytic mechanism. The active-site Nucleophile is Asp-119.

It belongs to the glycosyl hydrolase 8 (cellulase D) family.

Its subcellular location is the secreted. It catalyses the reaction Endohydrolysis of (1-&gt;4)-beta-D-glucosidic linkages in cellulose, lichenin and cereal beta-D-glucans.. Its pathway is glycan metabolism; bacterial cellulose biosynthesis. Hydrolyzes carboxymethylcellulose. This is Endoglucanase (bcsZ) from Pseudomonas fluorescens (strain SBW25).